Reading from the N-terminus, the 238-residue chain is MTHVEVVATIAPQLSIEETLIQKINHRIDAIDVLELRIDQIENVTVDQVAEMITKLKVMQDSFKLLVTYRTKLQGGYGQFINDLYLNLISDLANINGIDMIDIEWQADIDIEKHQRIITHLQQYNKEVVISHHNFESTPPLDELQFIFFKMQKFNPEYVKLAVMPHNKNDVLNLLQAMSTFSDTMDCKVVGISMSKLGLISRTAQGVFGGALTYGCIGEPQAPGQIDVTDLKAQVTLY.

3-dehydroquinate is bound by residues 35–37 (ELR) and R70. The Proton donor/acceptor role is filled by H133. The active-site Schiff-base intermediate with substrate is K160. Residues R202 and Q225 each contribute to the 3-dehydroquinate site.

This sequence belongs to the type-I 3-dehydroquinase family. As to quaternary structure, homodimer.

It catalyses the reaction 3-dehydroquinate = 3-dehydroshikimate + H2O. The protein operates within metabolic intermediate biosynthesis; chorismate biosynthesis; chorismate from D-erythrose 4-phosphate and phosphoenolpyruvate: step 3/7. Involved in the third step of the chorismate pathway, which leads to the biosynthesis of aromatic amino acids. Catalyzes the cis-dehydration of 3-dehydroquinate (DHQ) and introduces the first double bond of the aromatic ring to yield 3-dehydroshikimate. This chain is 3-dehydroquinate dehydratase, found in Staphylococcus aureus (strain MSSA476).